A 344-amino-acid chain; its full sequence is 4'-phosphopantetheinyl transferase NpgA (344 aa).

The protein belongs to the P-Pant transferase superfamily.

It catalyses the reaction apo-[ACP] + CoA = holo-[ACP] + adenosine 3',5'-bisphosphate + H(+). In terms of biological role, transfers the 4'-phosphopantetheine moiety from coenzyme A to a Ser of an acyl-carrier-protein. The enzyme is able to transfer the cofactor to a broad range of enzymes with acyl- or peptidyl-carrier protein domains. Required for primary biological processes such as growth and asexual/sexual development, and activates target enzymes involved in the synthesis of metabolites such as fatty acids, polyketides and nonribosomal peptides, lysine, siderophore, penicillin, sterigmatocystin, shamixantone, dehydroaustinol, and pigments. In Emericella nidulans (strain FGSC A4 / ATCC 38163 / CBS 112.46 / NRRL 194 / M139) (Aspergillus nidulans), this protein is 4'-phosphopantetheinyl transferase NpgA (npgA).